Here is a 441-residue protein sequence, read N- to C-terminus: Proline--tRNA ligase (441 aa).

The protein belongs to the class-II aminoacyl-tRNA synthetase family. ProS type 2 subfamily. Homodimer.

The protein localises to the cytoplasm. It catalyses the reaction tRNA(Pro) + L-proline + ATP = L-prolyl-tRNA(Pro) + AMP + diphosphate. Its function is as follows. Catalyzes the attachment of proline to tRNA(Pro) in a two-step reaction: proline is first activated by ATP to form Pro-AMP and then transferred to the acceptor end of tRNA(Pro). The protein is Proline--tRNA ligase of Bartonella quintana (strain Toulouse) (Rochalimaea quintana).